The primary structure comprises 332 residues: Holliday junction branch migration complex subunit RuvB (332 aa).

The interval 1–181 is large ATPase domain (RuvB-L); sequence MSRILDNEQM…FGITGHMEYY (181 aa). ATP is bound by residues L20, R21, G62, K65, T66, T67, 128 to 130, R171, Y181, and R218; that span reads EDF. Residue T66 coordinates Mg(2+). The small ATPAse domain (RuvB-S) stretch occupies residues 182 to 252; that stretch reads EEADLTEIVE…ITDQALSMLD (71 aa). The segment at 255 to 332 is head domain (RuvB-H); the sequence is HEGLDYVDQK…EHLGYEYMEK (78 aa). R291, R310, R312, and R315 together coordinate DNA.

This sequence belongs to the RuvB family. Homohexamer. Forms an RuvA(8)-RuvB(12)-Holliday junction (HJ) complex. HJ DNA is sandwiched between 2 RuvA tetramers; dsDNA enters through RuvA and exits via RuvB. An RuvB hexamer assembles on each DNA strand where it exits the tetramer. Each RuvB hexamer is contacted by two RuvA subunits (via domain III) on 2 adjacent RuvB subunits; this complex drives branch migration. In the full resolvosome a probable DNA-RuvA(4)-RuvB(12)-RuvC(2) complex forms which resolves the HJ.

It localises to the cytoplasm. It carries out the reaction ATP + H2O = ADP + phosphate + H(+). In terms of biological role, the RuvA-RuvB-RuvC complex processes Holliday junction (HJ) DNA during genetic recombination and DNA repair, while the RuvA-RuvB complex plays an important role in the rescue of blocked DNA replication forks via replication fork reversal (RFR). RuvA specifically binds to HJ cruciform DNA, conferring on it an open structure. The RuvB hexamer acts as an ATP-dependent pump, pulling dsDNA into and through the RuvAB complex. RuvB forms 2 homohexamers on either side of HJ DNA bound by 1 or 2 RuvA tetramers; 4 subunits per hexamer contact DNA at a time. Coordinated motions by a converter formed by DNA-disengaged RuvB subunits stimulates ATP hydrolysis and nucleotide exchange. Immobilization of the converter enables RuvB to convert the ATP-contained energy into a lever motion, pulling 2 nucleotides of DNA out of the RuvA tetramer per ATP hydrolyzed, thus driving DNA branch migration. The RuvB motors rotate together with the DNA substrate, which together with the progressing nucleotide cycle form the mechanistic basis for DNA recombination by continuous HJ branch migration. Branch migration allows RuvC to scan DNA until it finds its consensus sequence, where it cleaves and resolves cruciform DNA. This chain is Holliday junction branch migration complex subunit RuvB, found in Streptococcus gordonii (strain Challis / ATCC 35105 / BCRC 15272 / CH1 / DL1 / V288).